A 6298-amino-acid chain; its full sequence is Adhesion G-protein coupled receptor V1 (6298 aa).

The N-terminal stretch at 1 to 28 (MSVTSEPGMISSFLLVYLSTLFISFVFG) is a signal peptide. 22 consecutive Calx-beta domains span residues 29–116 (EAEI…FHLT), 132–236 (ASVT…IQLR), 251–362 (VEII…IMLL), 389–489 (YGVL…LTIL), 646–746 (PAIA…TLSL), 764–862 (DLII…VILS), 877–980 (VNIT…IILL), 994–1094 (ASLR…IVLF), 1108–1208 (ATVI…LRLV), 1440–1540 (AMPR…FLLK), 1562–1662 (QKSD…VTLV), 1706–1805 (TGLP…VELL), 1846–1948 (ILVT…VSIL), 1962–2075 (TLTI…IELF), 2103–2202 (HLVI…VQLL), 2218–2320 (VITI…VQLA), 2437–2537 (TLCL…FLIS), 2576–2672 (FIIY…VRLG), 2687–2786 (VTVN…VVLY), 2810–2921 (LTVE…VNLT), 2945–3044 (QIVI…LLLT), and 3067–3167 (DGPG…VCTL). The Extracellular segment spans residues 29–5901 (EAEIRFTGQT…TDNSSSYNEA (5873 aa)). EAR repeat units lie at residues 3251 to 3292 (VFSI…RWQG), 3293 to 3341 (TFVP…MLTA), 3344 to 3389 (RLVL…RWNG), 3391 to 3435 (NFAW…TWSG), 3437 to 3484 (QFIN…VWEM), and 3488 to 3530 (SLRY…CWNS). Calx-beta domains lie at 3581–3622 (QSDF…RVQL), 3636–3736 (SVRV…VVTL), 3772–3872 (GAVR…VTIA), 3919–4003 (GGVI…ISLV), 4017–4120 (VNVV…IELT), 4135–4235 (SVII…EFQL), 4251–4351 (ARIT…LAIT), 4384–4484 (RIII…ILLI), 4507–4607 (SPFG…IVQL), 4628–4728 (KFGD…AVQL), 4989–5089 (TTAE…INLT), 5281–5325 (AVEE…YVFL), and 5361–5461 (IGFS…FVEL). One can recognise a GAIN-B domain in the interval 5740–5896 (SILALHWNPQ…AVYAQTDNSS (157 aa)). Disulfide bonds link Cys-5849–Cys-5878 and Cys-5866–Cys-5880. A GPS region spans residues 5849-5896 (CLLWNQAAASWLSDSQFCKVVEDASDYVECACSHMSVYAVYAQTDNSS). The chain crosses the membrane as a helical span at residues 5902-5922 (FFSAGLICISGLCLAVVSHMF). The Cytoplasmic segment spans residues 5923–5932 (CARHSMFAAK). The helical transmembrane segment at 5933 to 5953 (LLTHMMVASLGTQILFLASAY) threads the bilayer. At 5954–5973 (ASPHLSEESCSAVAAVAHYL) the chain is on the extracellular side. The chain crosses the membrane as a helical span at residues 5974–5994 (YLCQFSWMLIQSVNFWYVLVV). Topologically, residues 5995–6003 (SDEHTERRC) are cytoplasmic. The helical transmembrane segment at 6004–6024 (LLFCLLSWGLPSFVVILLILI) threads the bilayer. Residues 6025–6052 (LRGIYHRSMPQIYGLIHGDLCFIPNIYA) are Extracellular-facing. The helical transmembrane segment at 6053-6073 (ALFTAALVPLMCLVVVFVVFI) threads the bilayer. The Cytoplasmic segment spans residues 6074–6097 (HAYQLKPQWKGYDDVFRGRTNAAE). A helical membrane pass occupies residues 6098 to 6118 (IPLILYLFALISMTWLWGGLH). At 6119-6126 (MAYGHFWM) the chain is on the extracellular side. Residues 6127–6147 (LVLFVIFNSLQGLYVFVVYFI) form a helical membrane-spanning segment. At 6148–6298 (LHNQTCCPMK…RRIPIADTHL (151 aa)) the chain is on the cytoplasmic side. Disordered stretches follow at residues 6206–6242 (ERSSFQQTSQASPDLKTSPQNGASFPSSGGYGPGSLI) and 6264–6283 (SVSDNESGQGSQEGGTLTDS). 2 stretches are compositionally biased toward polar residues: residues 6208–6226 (SSFQQTSQASPDLKTSPQN) and 6265–6283 (VSDNESGQGSQEGGTLTDS).

This sequence belongs to the G-protein coupled receptor 2 family. Adhesion G-protein coupled receptor (ADGR) subfamily. Forms a heterodimer, consisting of a large extracellular region (alpha subunit) non-covalently linked to a seven-transmembrane moiety (beta subunit). Interacts (via the cytoplasmic region) with PDZD7. Component of USH2 complex, composed of ADGRV1, PDZD7, USH2A and WHRN. Interacts with USH2A and WHRN. Interacts (via the cytoplasmic region) with MYO7A (via MyTH4-FERM domains). In terms of processing, autoproteolytically cleaved into 2 subunits, an extracellular alpha subunit and a seven-transmembrane subunit. Expressed by oligodendrocytes. In midbrain, enriched in the myelinated regions of the superior and inferior colliculi. In the cochlea, expressed in developing hair cells. Expressed by photoreceptors in the retina.

The protein resides in the cell membrane. The protein localises to the cell projection. It localises to the stereocilium membrane. It is found in the photoreceptor inner segment. Its subcellular location is the secreted. Its function is as follows. G-protein coupled receptor which has an essential role in the development of hearing and vision. Couples to G-alpha(i)-proteins, GNAI1/2/3, G-alpha(q)-proteins, GNAQ, as well as G-alpha(s)-proteins, GNAS, inhibiting adenylate cyclase (AC) activity and cAMP production. Required for the hair bundle ankle formation, which connects growing stereocilia in developing cochlear hair cells of the inner ear. In response to extracellular calcium, activates kinases PKA and PKC to regulate myelination by inhibiting the ubiquitination of MAG, thus enhancing the stability of this protein in myelin-forming cells of the auditory pathway. In retina photoreceptors, the USH2 complex is required for the maintenance of periciliary membrane complex that seems to play a role in regulating intracellular protein transport. Involved in the regulation of bone metabolism. Cleaved ADGRV1 beta-subunit couples with G-alpha(i)-proteins, GNAI1/2/3, and constitutively inhibits adenylate cyclase (AC) activity with a stronger effect than full ADGRV1. The protein is Adhesion G-protein coupled receptor V1 of Mus musculus (Mouse).